An 8384-amino-acid chain; its full sequence is Mucin-19 (8384 aa).

A signal peptide spans 1–21; the sequence is MKLILWYLVVALWCFFKDVEA. Disordered stretches follow at residues 33–197, 222–247, 279–305, and 332–467; these read AASR…YGAG, SKADGRETRGSGSAGGETIVFGPDAG, GDTGISSKTVEGNQTSSSGGSVSIDLG, and QEGF…PEAT. Low complexity-rich tracts occupy residues 35–48 and 88–98; these read SRSGGFSYGSSSSG and GGFFNSSSSSG. Positions 169-184 are enriched in basic and acidic residues; that stretch reads DKSRERWDAGNSRSED. The segment covering 187 to 197 has biased composition (polar residues); it reads ADSTNTRYGAG. Polar residues predominate over residues 279–299; it reads GDTGISSKTVEGNQTSSSGGS. Over residues 359–369 the composition is skewed to low complexity; the sequence is GSDSSSSGDSS. Residues 370 to 381 are compositionally biased toward polar residues; it reads ARNGFENSSGIS. Low complexity-rich tracts occupy residues 424 to 435 and 443 to 452; these read SDSGGNTWSSDS and TSSSEYSTSG. VWFD domains are found at residues 478–649, 815–995, and 1274–1447; these read GEIS…QHCN, GRCK…SSCI, and TICH…QECS. 8 disulfide bridges follow: C502-C648, C817-C952, C838-C994, C857-C865, C1276-C1411, C1298-C1446, C1307-C1408, and C1323-C1330. Disordered regions lie at residues 1680–1699, 1732–2464, 2484–2526, 2540–2827, 2850–2917, 2984–3027, 3075–3368, 3386–3428, 3585–3628, 3667–3736, 4105–4147, 4187–4251, 4315–4390, 4414–4455, 4510–4583, 4790–4843, 4895–4930, 5130–5161, 5429–5452, 5464–5494, 5880–5918, 6069–6403, 6440–6918, 6953–7223, 7250–7749, 7783–7975, and 8020–8133; these read TSSSETTGTTLGPLTEPFTT, AGTT…KSPG, LESE…TEGS, RPLD…MTGT, STVG…LGTI, VTTG…SGTT, GTTG…GKTG, TTRL…GKTG, ETTG…TNGL, GSSA…TGLP, TGSS…NGLS, SAGV…AEVT, GLSA…SARV, TGSS…TNGQ, TGTT…TGLP, SSAGVTGTNGLSAEATETTGPSAGVTGTTGLSAGVT, TGTTGPSAEETGATGPSAEVTGTTGPSGGVTG, VTGTTELSAEVTEKTGPSAEVTGK, GPSAEVTGTTGSSAGVTGTTGPSAGVTGTTG, GTSIPLTGKTGTTRTSVEESTTTGPSAGITGTNGLSAEM, TGKT…STES, GRAT…ETTK, GTSE…TGFK, SFST…SKTG, KNGS…EAGS, and SGRS…VSQP. Composition is skewed to low complexity over residues 1732 to 1746, 1772 to 1813, and 1820 to 1833; these read AGTTGGVDAATTGAA, PGEA…TTGP, and GATSSEATSSEGMS. The span at 1835-1860 shows a compositional bias: polar residues; the sequence is VTGQSLGSTAGSDSEITAKTSFTGSS. The span at 1868–1879 shows a compositional bias: low complexity; sequence PSPGSPGHFSGG. Polar residues predominate over residues 1880 to 1905; sequence TTEWGNVATTGAAGENTSGALGSTEG. Residues 1909–1921 are compositionally biased toward low complexity; sequence ATTSAGSGNTAGT. Residues 1950–1968 show a composition bias toward polar residues; that stretch reads GSSTPGEADIGNTSFGKSG. Low complexity-rich tracts occupy residues 1969–1983 and 2013–2049; these read TPTVSAASTTSSPVS and GGKITSGWSSSGTSTGASNTPGATGSSTGQTDTSGPS. The segment covering 2055–2100 has biased composition (polar residues); it reads NYGQSSEIPGTIKSSSDVSGTMGQSDTTSGPSVAVTRTSEQSSGVT. Composition is skewed to low complexity over residues 2132–2147 and 2159–2170; these read TTGSSAEGSGTTGPSS and GSGTSGQSVTGS. Composition is skewed to polar residues over residues 2171 to 2186 and 2209 to 2225; these read RATGLSATELGTTVSF and GSGTTGPSVVRSGTTRL. Low complexity-rich tracts occupy residues 2233–2246 and 2280–2313; these read TESSPGVTGTTTPS and SGPSVVGSGTTGPTSAGLGTTAPSTRRSSTTKPS. The tract at residues 2238–6086 is approximate repeats of G-V-T-G-T-T-G-P-S-A; the sequence is GVTGTTTPSA…GVTGTTGLSA (3849 aa). 2 stretches are compositionally biased toward polar residues: residues 2316-2332 and 2354-2372; these read RTGTTGQSGAESGTTEP and ATESSTSRPLGETTGTTIP. Gly residues predominate over residues 2403–2419; it reads SSGGSGATRSSGGGMGT. Residues 2420 to 2441 show a composition bias toward low complexity; it reads TGQSTARSETTGPLFGLTGTFG. The span at 2442–2460 shows a compositional bias: polar residues; it reads QSATVTGTSSNSAGVTTPE. 3 stretches are compositionally biased toward low complexity: residues 2512–2526, 2545–2571, and 2578–2589; these read SAGETGTTEPSTEGS, GSGTTGTLSGGSSTTRSSDGTTGTTRK, and TTGLSGLTGTSG. 2 stretches are compositionally biased toward polar residues: residues 2595–2610 and 2638–2653; these read TGTSSKSAGVTVTSEK and TRPSGGVTVTSGQSAR. Over residues 2654–2681 the composition is skewed to low complexity; that stretch reads VTETVGASAGVTGTTGPSTEGSGATGPS. 2 stretches are compositionally biased toward polar residues: residues 2695–2748 and 2755–2770; these read SGTT…TGTT and TETTRPSVVKSGTTGP. The segment covering 2787–2799 has biased composition (low complexity); sequence ATRSSGGETETTG. 3 stretches are compositionally biased toward polar residues: residues 2800–2827, 2850–2859, and 2874–2892; these read QSAVKSGTTESFTRLTRTSGQSAGMTGT, STVGLETTRP, and AQTTGPSAGVTVTSGQSAR. Residues 2894–2910 are compositionally biased toward low complexity; the sequence is TGASGPSVGVTGTTGPA. Residues 2984–2998 are compositionally biased toward polar residues; sequence VTTGPSVTGVETTAK. A compositionally biased stretch (low complexity) spans 2999–3027; sequence TTSGGLSTTISSVGGTGTTGQSPERSGTT. Over residues 3099 to 3109 the composition is skewed to polar residues; sequence PSITGSGTTRP. Residues 3114–3130 are compositionally biased toward low complexity; it reads SWTAGTSSGGHSTTSPS. Residues 3131–3159 show a composition bias toward polar residues; that stretch reads VRGTETTGQSAAESVTTGPVTGYTETSGP. Over residues 3172–3188 the composition is skewed to low complexity; that stretch reads TVTQTTGSSAAVSGTTV. Over residues 3189-3224 the composition is skewed to polar residues; sequence QSLTVSGTTRPSSGQTEITGSSVKESGTTESSAVRS. The segment covering 3225–3277 has biased composition (low complexity); it reads GTTGPTAGVTGTNGPSSAGVTGITGSSPGVTGTTGSSPGVTGTTGSSARSGTS. Polar residues-rich tracts occupy residues 3303–3317 and 3324–3362; these read ITGTNGLSAEVTGTT and TGTTGPSAGVTRTTGLSAGETGTTGLSPGVTRTTRSSAG. The span at 3390–3417 shows a compositional bias: low complexity; the sequence is SAGVTGTTGPSPGVTGTTGTPAGVTGTT. Polar residues-rich tracts occupy residues 3702 to 3728 and 4105 to 4116; these read VTGTTGLSPGVTGTSGLSAEVTGTTGP and TGSSARSGTSIP. Low complexity predominate over residues 4117 to 4126; the sequence is SVGETGTTRT. Residues 4320-4346 are compositionally biased toward polar residues; the sequence is VTGTTRPSAGVTGTTGQSAEVTGTTEP. Composition is skewed to low complexity over residues 4347 to 4385 and 4414 to 4426; these read SAGLTETTGSSTGVTGATGPLAGVTGTTGISTEVTGTTG and TGSSARSGTSTPS. 2 stretches are compositionally biased toward low complexity: residues 5469–5494 and 5889–5903; these read VTGTTGSSAGVTGTTGPSAGVTGTTG and TGTTRTSVEESTTTG. 3 stretches are compositionally biased toward polar residues: residues 5908-5918, 6071-6103, and 6111-6121; these read ITGTNGLSAEM, KTRSSAGVTGTTGLSAKSGTSIPSAGKTGTTKT, and TRPSAGITATT. Residues 6156–6168 show a composition bias toward low complexity; it reads TTTGTTGVTTGTT. 2 stretches are compositionally biased toward polar residues: residues 6217-6248 and 6257-6275; these read EVSTISEVSNTGITGVGSETSIETGISNTATT and APGSSSTEATTSIGGSAST. Positions 6284 to 6295 are enriched in low complexity; the sequence is TGSTRGVRTTGS. 2 stretches are compositionally biased toward polar residues: residues 6303 to 6323 and 6336 to 6346; these read GEFSGTTISSGGFHTEATTLT and ESTTSLPQSAK. A compositionally biased stretch (low complexity) spans 6378-6389; the sequence is SGTTISSGGSHT. Composition is skewed to polar residues over residues 6440–6457 and 6470–6503; these read GRATGATTSIAGSDTSQA and TTITSGDSHTEATALTGSRGSIGTESTVETTTYI. Residues 6507-6523 show a composition bias toward low complexity; it reads GTTRGGLATATTGAFSG. Residues 6560-6571 are compositionally biased toward polar residues; the sequence is TTFTSGGSHTEA. Residues 6581–6597 show a composition bias toward low complexity; that stretch reads TGTESRAATTRAAPGTT. A compositionally biased stretch (polar residues) spans 6599–6608; it reads VPGSSNTGAT. The span at 6612–6628 shows a compositional bias: low complexity; that stretch reads GGSATTRGRITTATTGA. Composition is skewed to polar residues over residues 6669–6680 and 6689–6698; these read RITSGGSYTATT and APGSSNTGAT. Residues 6707–6718 are compositionally biased toward low complexity; the sequence is TRGRITTATTGA. Positions 6752–6766 are enriched in polar residues; the sequence is TTLTGDRSSTGSESR. Residues 6767–6781 are compositionally biased toward low complexity; sequence TATTGVAPGTTVAPG. Over residues 6794-6817 the composition is skewed to polar residues; that stretch reads SGTTNIGRATGATTSIVGSDTSQA. Over residues 6827–6842 the composition is skewed to low complexity; the sequence is SPGASSTSQSSRPGTS. Polar residues predominate over residues 6843 to 6875; sequence VTPDSSASESETVTTKEFSGTTAISRTSHTGTP. The span at 6887–6901 shows a compositional bias: low complexity; that stretch reads TATTGVAPGTTVAPG. 2 stretches are compositionally biased toward polar residues: residues 6902 to 6911 and 6953 to 6964; these read SSNTEATTSV and GTSEVAPSTTVA. Residues 6966 to 6994 show a composition bias toward low complexity; it reads GSFSTAATTSPGASGTTGVTTTTKTTTSL. Over residues 7006–7041 the composition is skewed to polar residues; the sequence is SATTGAPGSRTGTAGVPSATTVSPGSSNSEATTSVG. Residues 7045 to 7074 are compositionally biased toward low complexity; that stretch reads KTGAETITEATTSTEGTGTSGTGFKTGTSE. Residues 7085–7094 show a composition bias toward polar residues; the sequence is SFSTAATTSP. Positions 7095-7112 are enriched in low complexity; it reads GASGMTGVTTTTKTTTSL. Residues 7143–7158 are compositionally biased toward polar residues; sequence TRVTPGSSNSEATTSV. 2 stretches are compositionally biased toward low complexity: residues 7201–7215 and 7250–7276; these read SGSSNTEATTSTEGT and SFSTATTSSGASGITRAGPTSETTTSL. A compositionally biased stretch (polar residues) spans 7293-7311; the sequence is SGTTVAPGSSNSEATTSVG. Over residues 7379–7397 the composition is skewed to low complexity; that stretch reads TTSTKGTGTSGTGFKTGTS. Residues 7403–7421 show a composition bias toward polar residues; sequence TTVSPGSFSTATISPGASR. Residues 7422–7435 are compositionally biased toward low complexity; it reads TTGAAPAAETTTSL. Positions 7465 to 7483 are enriched in polar residues; that stretch reads SATTIAPGSSNSEATTSLG. A compositionally biased stretch (gly residues) spans 7525–7537; the sequence is PLGGASGTSGGYV. Polar residues-rich tracts occupy residues 7544–7557 and 7571–7596; these read PTTSIEETGTSRTI and AGTSVVAPSTTVAPGSFSTAATTSPG. Positions 7600–7613 are enriched in low complexity; it reads MTGVRTTSKTTTSL. Composition is skewed to polar residues over residues 7642–7669 and 7698–7708; these read SSRTTILSGSSNTEATNSIEETGTSGTG and SFSTAATTSPG. The segment covering 7715-7732 has biased composition (low complexity); it reads TGPTAETTTFLGGSSTTG. Polar residues predominate over residues 7783–7811; the sequence is KNGSMTTALGSQLSSSQTVIPGSSGTISH. A compositionally biased stretch (low complexity) spans 7812–7828; that stretch reads TTVAPGSSVTGTTTGAS. Polar residues predominate over residues 7830-7851; it reads DQVTGSKTGTTGVALSTTVAPG. Residues 7852–7861 are compositionally biased toward low complexity; that stretch reads SSSTEATTST. Polar residues predominate over residues 7862–7891; it reads GVHRTTVVGQKTGATTRGSAKQGTRSTIEA. Residues 7892–7917 are compositionally biased toward low complexity; sequence TTSFRGTGTTGSGMNTGTTGVVSGNT. Polar residues predominate over residues 7918 to 7934; it reads ISPSSFNTEATSGTSER. A compositionally biased stretch (low complexity) spans 7938 to 7952; it reads GSEIGTTGIVSGTTV. Composition is skewed to polar residues over residues 7953-7965, 8020-8040, 8048-8081, and 8110-8120; these read APGSSNTEATTSL, SGRSQPTGSKTGYTVTGSGTT, TGNTPGSTGVTSSQEGTTVVSSGITGIPETSISG, and ETGVQTGSTLV. One can recognise a VWFC domain in the interval 8159 to 8225; sequence PVCHGPLGEE…DTCCEIGYCE (67 aa). 4 disulfides stabilise this stretch: C8288-C8339, C8306-C8353, C8315-C8369, and C8319-C8371. Residues 8288–8376 form the CTCK domain; sequence CKNNCRSSLV…TTCSCLDICQ (89 aa).

Expressed corneal epithelial cells, conjunctival goblet and epithelial cells and lacrimal gland cells (at protein level). Expressed by mucous cells of the submandibular gland and submucosal gland of the trachea. Expressed by middle ear epithelial cells.

The protein localises to the secreted. In terms of biological role, may function in ocular mucus homeostasis. The polypeptide is Mucin-19 (MUC19) (Homo sapiens (Human)).